The chain runs to 376 residues: GDSL esterase/lipase 2 (376 aa).

Residues 1 to 25 (MENSRSTLIIFFAYTTIILIGSINC) form the signal peptide. The N-linked (GlcNAc...) asparagine glycan is linked to Asn-36. Ser-46 serves as the catalytic Nucleophile. N-linked (GlcNAc...) asparagine glycans are attached at residues Asn-186 and Asn-205. Active-site residues include Asp-340 and His-343. The N-linked (GlcNAc...) asparagine glycan is linked to Asn-362.

The protein belongs to the 'GDSL' lipolytic enzyme family. As to expression, expressed seedlings, roots and stems.

The protein localises to the secreted. Functionally, involved in the resistance to the necrotropic bacteria Erwinia carotovora, probably via negative regulation of auxin signaling. Possesses lipase and antimicrobial activities, inhibiting germination of fungal spores (e.g. Alternaria brassicicola). The protein is GDSL esterase/lipase 2 (GLIP2) of Arabidopsis thaliana (Mouse-ear cress).